A 1177-amino-acid chain; its full sequence is DNA-directed RNA polymerase subunit beta (1177 aa).

Positions 1147 to 1161 (DDTEIEMRDTEDDDD) are enriched in acidic residues. The segment at 1147 to 1177 (DDTEIEMRDTEDDDDHQSADKLNVEVETTKE) is disordered. The span at 1162–1177 (HQSADKLNVEVETTKE) shows a compositional bias: basic and acidic residues.

It belongs to the RNA polymerase beta chain family. As to quaternary structure, the RNAP catalytic core consists of 2 alpha, 1 beta, 1 beta' and 1 omega subunit. When a sigma factor is associated with the core the holoenzyme is formed, which can initiate transcription.

It catalyses the reaction RNA(n) + a ribonucleoside 5'-triphosphate = RNA(n+1) + diphosphate. Functionally, DNA-dependent RNA polymerase catalyzes the transcription of DNA into RNA using the four ribonucleoside triphosphates as substrates. This chain is DNA-directed RNA polymerase subunit beta, found in Bacillus cereus (strain G9842).